An 863-amino-acid polypeptide reads, in one-letter code: Linoleate 9S-lipoxygenase 1 (863 aa).

One can recognise a PLAT domain in the interval 32-158 (RDFTASLLDN…KYHYNRIFFA (127 aa)). A Lipoxygenase domain is found at 161–863 (SYLPSQMPEA…ARGIPNSISI (703 aa)). The interval 204–244 (NDLGEPDRDNPRPVLGGSQKHPYPRRGRTGRIPTKKDPNSE) is disordered. Fe cation contacts are provided by histidine 518, histidine 523, histidine 709, asparagine 713, and isoleucine 863.

Belongs to the lipoxygenase family. As to quaternary structure, monomer. It depends on Fe cation as a cofactor.

The protein localises to the cytoplasm. The enzyme catalyses (9Z,12Z)-octadecadienoate + O2 = (9S)-hydroperoxy-(10E,12Z)-octadecadienoate. It functions in the pathway lipid metabolism; oxylipin biosynthesis. Its function is as follows. Plant lipoxygenase may be involved in a number of diverse aspects of plant physiology including growth and development, pest resistance, and senescence or responses to wounding. This lipoxygenase introduces molecular oxygen exclusively into the C-9 position of linoleic and linolenic. The polypeptide is Linoleate 9S-lipoxygenase 1 (Oryza sativa subsp. japonica (Rice)).